A 356-amino-acid chain; its full sequence is Putative ankyrin repeat protein R599 (356 aa).

ANK repeat units follow at residues 111–143 (NDDI…FCDN), 152–182 (RLEK…NVNT), 183–213 (HNYE…KLSD), 215–238 (KRKI…ELEV), 239–266 (NFDD…GANI), and 267–298 (NSIP…DINN).

The protein is Putative ankyrin repeat protein R599 of Acanthamoeba polyphaga (Amoeba).